A 757-amino-acid polypeptide reads, in one-letter code: 5-methyltetrahydropteroyltriglutamate--homocysteine methyltransferase (757 aa).

Residues 16 to 19 and Lys112 contribute to the 5-methyltetrahydropteroyltri-L-glutamate site; that span reads RELK. Residues 432-434 and Glu485 each bind L-homocysteine; that span reads IGS. L-methionine is bound by residues 432-434 and Glu485; that span reads IGS. 5-methyltetrahydropteroyltri-L-glutamate contacts are provided by residues 516 to 517 and Trp562; that span reads RC. Position 600 (Asp600) interacts with L-homocysteine. Residue Asp600 participates in L-methionine binding. Glu606 provides a ligand contact to 5-methyltetrahydropteroyltri-L-glutamate. The Zn(2+) site is built by His642, Cys644, and Glu666. The active-site Proton donor is His695. Cys727 provides a ligand contact to Zn(2+).

The protein belongs to the vitamin-B12 independent methionine synthase family. Zn(2+) is required as a cofactor.

It carries out the reaction 5-methyltetrahydropteroyltri-L-glutamate + L-homocysteine = tetrahydropteroyltri-L-glutamate + L-methionine. The protein operates within amino-acid biosynthesis; L-methionine biosynthesis via de novo pathway; L-methionine from L-homocysteine (MetE route): step 1/1. In terms of biological role, catalyzes the transfer of a methyl group from 5-methyltetrahydrofolate to homocysteine resulting in methionine formation. The sequence is that of 5-methyltetrahydropteroyltriglutamate--homocysteine methyltransferase from Actinobacillus pleuropneumoniae serotype 5b (strain L20).